The primary structure comprises 487 residues: UDP-N-acetylmuramoyl-L-alanyl-D-glutamate--2,6-diaminopimelate ligase (487 aa).

2 residues coordinate UDP-N-acetyl-alpha-D-muramoyl-L-alanyl-D-glutamate: Leu23 and Ser25. Position 108–114 (108–114 (GTNGKTS)) interacts with ATP. UDP-N-acetyl-alpha-D-muramoyl-L-alanyl-D-glutamate-binding positions include 150-151 (TT), Ser177, Gln183, and Arg185. An N6-carboxylysine modification is found at Lys217. Meso-2,6-diaminopimelate is bound by residues Arg378, 402–405 (DNPR), Gly453, and Glu457. The Meso-diaminopimelate recognition motif signature appears at 402 to 405 (DNPR).

The protein belongs to the MurCDEF family. MurE subfamily. Mg(2+) serves as cofactor. Carboxylation is probably crucial for Mg(2+) binding and, consequently, for the gamma-phosphate positioning of ATP.

It is found in the cytoplasm. The catalysed reaction is UDP-N-acetyl-alpha-D-muramoyl-L-alanyl-D-glutamate + meso-2,6-diaminopimelate + ATP = UDP-N-acetyl-alpha-D-muramoyl-L-alanyl-gamma-D-glutamyl-meso-2,6-diaminopimelate + ADP + phosphate + H(+). It participates in cell wall biogenesis; peptidoglycan biosynthesis. In terms of biological role, catalyzes the addition of meso-diaminopimelic acid to the nucleotide precursor UDP-N-acetylmuramoyl-L-alanyl-D-glutamate (UMAG) in the biosynthesis of bacterial cell-wall peptidoglycan. This Pseudomonas aeruginosa (strain ATCC 15692 / DSM 22644 / CIP 104116 / JCM 14847 / LMG 12228 / 1C / PRS 101 / PAO1) protein is UDP-N-acetylmuramoyl-L-alanyl-D-glutamate--2,6-diaminopimelate ligase.